A 532-amino-acid chain; its full sequence is Amidophosphoribosyltransferase 3, chloroplastic (532 aa).

The N-terminal 59 residues, 1-59 (MAFSVEEISSILPNSLSANPRNVSQNTISPSFFKPSLKPYASKTLISLSCRRSLSPVFS), are a transit peptide targeting the chloroplast. The active-site Nucleophile is C77. In terms of domain architecture, Glutamine amidotransferase type-2 spans 77 to 296 (CGVVGIHGDP…PGEIVVVDRN (220 aa)). Positions 313, 459, 511, and 514 each coordinate [4Fe-4S] cluster.

The protein in the C-terminal section; belongs to the purine/pyrimidine phosphoribosyltransferase family. It depends on [4Fe-4S] cluster as a cofactor. The cofactor is Mg(2+). In terms of tissue distribution, mostly expressed at low levels in leaves, and, to a lower extent, in cotyledons.

The protein resides in the plastid. It localises to the chloroplast stroma. It catalyses the reaction 5-phospho-beta-D-ribosylamine + L-glutamate + diphosphate = 5-phospho-alpha-D-ribose 1-diphosphate + L-glutamine + H2O. Its pathway is purine metabolism; IMP biosynthesis via de novo pathway; N(1)-(5-phospho-D-ribosyl)glycinamide from 5-phospho-alpha-D-ribose 1-diphosphate: step 1/2. With respect to regulation, inhibited by the phenyltriazole acetic acid compound [5-(4-chlorophenyl)-1-isopropyl-1H-[1,2,4]triazol-3-yl]-acetic acid (DAS734), a bleaching herbicide. Repressed by AMP, ADP, ATP and GTP, and slightly by GMP. Its function is as follows. Catalyzes the first committed step of 'de novo' purine biosynthesis from glutamine. The polypeptide is Amidophosphoribosyltransferase 3, chloroplastic (ASE3) (Arabidopsis thaliana (Mouse-ear cress)).